The sequence spans 478 residues: Aspartyl/glutamyl-tRNA(Asn/Gln) amidotransferase subunit B (478 aa).

This sequence belongs to the GatB/GatE family. GatB subfamily. In terms of assembly, heterotrimer of A, B and C subunits.

It catalyses the reaction L-glutamyl-tRNA(Gln) + L-glutamine + ATP + H2O = L-glutaminyl-tRNA(Gln) + L-glutamate + ADP + phosphate + H(+). The enzyme catalyses L-aspartyl-tRNA(Asn) + L-glutamine + ATP + H2O = L-asparaginyl-tRNA(Asn) + L-glutamate + ADP + phosphate + 2 H(+). Functionally, allows the formation of correctly charged Asn-tRNA(Asn) or Gln-tRNA(Gln) through the transamidation of misacylated Asp-tRNA(Asn) or Glu-tRNA(Gln) in organisms which lack either or both of asparaginyl-tRNA or glutaminyl-tRNA synthetases. The reaction takes place in the presence of glutamine and ATP through an activated phospho-Asp-tRNA(Asn) or phospho-Glu-tRNA(Gln). The sequence is that of Aspartyl/glutamyl-tRNA(Asn/Gln) amidotransferase subunit B from Brevibacillus brevis (strain 47 / JCM 6285 / NBRC 100599).